The chain runs to 214 residues: ER lumen protein-retaining receptor 3 (214 aa).

Over 1–4 (MNVF) the chain is Lumenal. Residues 5-24 (RISGDVSHLLAIIILLLKMW) traverse the membrane as a helical segment. Topologically, residues 25–32 (KSKSCAGI) are cytoplasmic. Residues 33-52 (SGKSQLLFALVFTTRYLDLF) form a helical membrane-spanning segment. The tract at residues 47 to 48 (RY) is interaction with the K-D-E-L motif on target proteins. The Lumenal segment spans residues 53–58 (TVFISA). The chain crosses the membrane as a helical span at residues 59 to 79 (YNTVMKIVFLVCAYVTVYLIY). Residues 80–92 (GKFRKAYDSENDT) lie on the Cytoplasmic side of the membrane. A helical membrane pass occupies residues 93-110 (FRLEFLLVPVIGLSFLEN). Residues 111–116 (YEFTPL) are Lumenal-facing. A helical membrane pass occupies residues 117–135 (EILWTFSIYLESVAILPQL). The Cytoplasmic segment spans residues 136 to 149 (FMISKTGEAESITT). A helical transmembrane segment spans residues 150–168 (HYLFFLGLYRVLYLANWIW). The tract at residues 159-169 (RVLYLANWIWR) is interaction with the K-D-E-L motif on target proteins. Residues 169 to 178 (RYHTEKFYDQ) are Lumenal-facing. Residues 179–199 (IAVVSGVVQTIFYFDFFYLYI) traverse the membrane as a helical segment. The Cytoplasmic portion of the chain corresponds to 200-214 (TKVLKGKKLSLPMPV). An important for recycling of cargo proteins with the sequence motif K-D-E-L from the Golgi to the endoplasmic reticulum region spans residues 204-207 (KGKK).

Belongs to the ERD2 family.

It localises to the endoplasmic reticulum membrane. The protein localises to the golgi apparatus membrane. The protein resides in the cytoplasmic vesicle. It is found in the COPI-coated vesicle membrane. Its function is as follows. Receptor for the C-terminal sequence motif K-D-E-L that is present on endoplasmic reticulum resident proteins and that mediates their recycling from the Golgi back to the endoplasmic reticulum. The protein is ER lumen protein-retaining receptor 3 (kdelr3) of Xenopus tropicalis (Western clawed frog).